Consider the following 142-residue polypeptide: MFFGEFEYKLDEKGRFPLPPGIRPSMKDGLILAPGTGEKCIYAYPLCEWKKLSESLKSTTVAPSKMRRLNRALFALAFDVNLDAQGRLTLPAPLKSYAGVNIEVIVAGVNNYIEIWDKETWESEKKASQEQAWQIIETLEGN.

2 consecutive SpoVT-AbrB domains span residues 5–48 (EFEY…PLCE) and 77–120 (AFDV…DKET).

Belongs to the MraZ family. As to quaternary structure, forms oligomers.

Its subcellular location is the cytoplasm. The protein resides in the nucleoid. The chain is Transcriptional regulator MraZ from Dehalococcoides mccartyi (strain ATCC BAA-2266 / KCTC 15142 / 195) (Dehalococcoides ethenogenes (strain 195)).